Consider the following 604-residue polypeptide: Sulfite reductase [NADPH] flavoprotein alpha-component (604 aa).

The Flavodoxin-like domain occupies 66–204 (VTVLSASQTG…AANAWTDNIA (139 aa)). Residues 72–77 (SQTGNA), 119–122 (STQG), and 155–164 (LGDSSYPNFC) each bind FMN. The FAD-binding FR-type domain maps to 239–453 (ADPFPAALLA…VERNDGFRLP (215 aa)). Residues threonine 327, glutamine 361, 391–394 (RLYS), 409–411 (TVG), and 424–427 (GGAS) each bind FAD. Residues 524–525 (SR), 530–534 (KIYVQ), and aspartate 566 each bind NADP(+). Tyrosine 604 serves as a coordination point for FAD.

Belongs to the NADPH-dependent sulphite reductase flavoprotein subunit CysJ family. The protein in the N-terminal section; belongs to the flavodoxin family. This sequence in the C-terminal section; belongs to the flavoprotein pyridine nucleotide cytochrome reductase family. Alpha(8)-beta(8). The alpha component is a flavoprotein, the beta component is a hemoprotein. The cofactor is FAD. FMN is required as a cofactor.

The enzyme catalyses hydrogen sulfide + 3 NADP(+) + 3 H2O = sulfite + 3 NADPH + 4 H(+). It functions in the pathway sulfur metabolism; hydrogen sulfide biosynthesis; hydrogen sulfide from sulfite (NADPH route): step 1/1. Component of the sulfite reductase complex that catalyzes the 6-electron reduction of sulfite to sulfide. This is one of several activities required for the biosynthesis of L-cysteine from sulfate. The flavoprotein component catalyzes the electron flow from NADPH -&gt; FAD -&gt; FMN to the hemoprotein component. The polypeptide is Sulfite reductase [NADPH] flavoprotein alpha-component (Neisseria meningitidis serogroup C (strain 053442)).